The sequence spans 61 residues: Small ribosomal subunit protein uS14 (61 aa).

Zn(2+)-binding residues include Cys24, Cys27, Cys40, and Cys43.

This sequence belongs to the universal ribosomal protein uS14 family. Zinc-binding uS14 subfamily. Part of the 30S ribosomal subunit. Contacts proteins S3 and S10. It depends on Zn(2+) as a cofactor.

Functionally, binds 16S rRNA, required for the assembly of 30S particles and may also be responsible for determining the conformation of the 16S rRNA at the A site. The sequence is that of Small ribosomal subunit protein uS14 from Coprothermobacter proteolyticus (strain ATCC 35245 / DSM 5265 / OCM 4 / BT).